Reading from the N-terminus, the 398-residue chain is Ornithine aminotransferase (398 aa).

Residue lysine 256 is modified to N6-(pyridoxal phosphate)lysine.

Belongs to the class-III pyridoxal-phosphate-dependent aminotransferase family. OAT subfamily. It depends on pyridoxal 5'-phosphate as a cofactor.

It localises to the cytoplasm. It carries out the reaction a 2-oxocarboxylate + L-ornithine = L-glutamate 5-semialdehyde + an L-alpha-amino acid. It functions in the pathway amino-acid biosynthesis; L-proline biosynthesis; L-glutamate 5-semialdehyde from L-ornithine: step 1/1. Catalyzes the interconversion of ornithine to glutamate semialdehyde. This Halalkalibacterium halodurans (strain ATCC BAA-125 / DSM 18197 / FERM 7344 / JCM 9153 / C-125) (Bacillus halodurans) protein is Ornithine aminotransferase.